A 474-amino-acid polypeptide reads, in one-letter code: Immunoglobulin heavy constant mu (474 aa).

The segment at 1–105 (GSASAPTLFP…NKEKNVPLPV (105 aa)) is CH1. Residues 1–450 (GSASAPTLFP…EEGFENLWAT (450 aa)) lie on the Extracellular side of the membrane. 4 Ig-like domains span residues 6 to 102 (PTLF…KNVP), 111 to 211 (PKVS…QNAS), 229 to 319 (PSFA…QTIS), and 329 to 430 (PDVY…RTVD). Cystine bridges form between Cys-28-Cys-88 and Cys-134-Cys-197. N-linked (GlcNAc...) (complex) asparagine glycosylation is present at Asn-46. Residues 106–217 (IAELPPKVSV…QNASSMCVPD (112 aa)) are CH2. N-linked (GlcNAc...) (complex) asparagine glycosylation is present at Asn-209. The segment at 218–323 (QDTAIRVFAI…LKQTISRPKG (106 aa)) is CH3. Intrachain disulfides connect Cys-244–Cys-303 and Cys-351–Cys-413. 2 N-linked (GlcNAc...) asparagine glycosylation sites follow: Asn-272 and Asn-279. The CH4 stretch occupies residues 324 to 452 (VALHRPDVYL…GFENLWATAS (129 aa)). The interval 437 to 453 (VSADEEGFENLWATAST) is important for IgM oligomerization. N-linked (GlcNAc...) asparagine glycosylation occurs at Asp-440. Residues 451–471 (ASTFIVLFLLSLFYSTTVTLF) form a helical membrane-spanning segment. Over 472-474 (KVK) the chain is Cytoplasmic.

In terms of assembly, the basic structural unit of both sIgM and mIgM molecules consists of two identical heavy chains and two identical light chains; disulfide-linked. N-terminal variable regions of the heavy and light chains form the antigen binding sites, whereas the C-terminal constant regions of the heavy chains interact with immune receptors to mediate effector functions. As to quaternary structure, part of IgM antibody. Forms high order oligomers, homopentamers stabilized by the JCHAIN and homohexamers that lack JCHAIN. The oligomerization amplifies an inherently low affinity of IgM antibodies for the antigen by multi-point attachment (avidity). Adjacent IgM protomers associate via interchain disulfide links to form an asymmetric pentameric structure with a 50 degree gap. A single copy of JCHAIN is covalently linked to the first and the fifth IgM monomers via interchain disulfide bonds thus closing the pentamer ring. Only JCHAIN-containing IgM binds PIGR secretory component (via D1-CDR1 region); this interaction is a prerequisite for IgM transcytosis across mucosal epithelium. Pentameric sIgM interacts (via CH4 domain) with FCRM (via Ig-like domain); the interaction is glycan-independent and multivalent theoretically involving up to eight binding sites for the IgM pentamer. Interacts with FCAMR; this interaction facilitates the endocytosis of IgM-coated microbes or IgM-antigen immune complexes. Antigen-bound IgM (via the Fc region) binds to globular domains of C1q component of the complement system, all three modules C1QA, C1QB and C1QC being involved in IgM binding; this interaction is multivalent. Pentameric sIgM (via Fc region) interacts with CD5L (via SRCR2) through interchain disulfide-linkages; this interaction protects CD5L from renal excretion and provides for high levels of CD5L in circulation. Part of IgM B cell receptor complex on pre-B cells, immature and mature B cells. The BCR complex consists of one membrane-bound IgM molecule responsible for antigen binding, non-covalently associated with CD79A and CD79B signaling chains. Post-translationally, N-glycosylated; important for IgM secretion and its localization at the plasma membrane. The interaction with FCMR is glycan-independent.

The protein localises to the secreted. It localises to the cell membrane. In terms of biological role, constant region of immunoglobulin heavy chains. Immunoglobulins, also known as antibodies, are membrane-bound or secreted glycoproteins produced by B lymphocytes. In the recognition phase of humoral immunity, the membrane-bound immunoglobulins serve as receptors which, upon binding of a specific antigen, trigger the clonal expansion and differentiation of B lymphocytes into immunoglobulins-secreting plasma cells. Secreted immunoglobulins mediate the effector phase of humoral immunity, which results in the elimination of bound antigens. The antigen binding site is formed by the variable domain of one heavy chain, together with that of its associated light chain. Thus, each immunoglobulin has two antigen binding sites with remarkable affinity for a particular antigen. The variable domains are assembled by a process called V-(D)-J rearrangement and can then be subjected to somatic hypermutations which, after exposure to antigen and selection, allow affinity maturation for a particular antigen. Constant region of secreted IgM (sIgM), also known as the Fc region of IgM antibody. Able to multimerize, forms high order polymers, mainly pentamers and occasionally hexamers, providing for multivalency and high avidity recognition of antigens. Natural sIgM are polyreactive and recognize conserved self- and pathogen-derived structures, whereas immune sIgM are secreted only upon exposure to pathogens and are antigen-specific. Both natural and immune sIgM are required for an efficient humoral immune response to infection. Mediates sIgM effector functions mostly via Fc receptors and the complement system. On lymphoid cells binds high-affinity Fc receptor FCMR and promotes induction of an efficient neutralizing IgG response while maintaining tolerance to self-antigens. Recruits C1q complement component to initiate the classical complement pathway, facilitating the recognition and neutralization of pathogens by the host. Together with C1q and mannose-binding lectin promotes the phagocytosis of apoptotic cells by macrophages, ensuring the clearance of potential autoimmune epitopes from tissues. Involved in mucosal immunity. It is transported by transcytosis across mucosal epithelium by PIGR and secreted on the apical side in complex with PIGR secretory component to scan mucosal lining for pathogens. IgM-antigen complexes undergo FCMR-mediated retrotranscytosis across mucosal M cells toward antigen-presenting cells in mucosal lymphoid tissues. Its function is as follows. Constant region of membrane-bound IgM, part of the B cell receptor complex (BCR). IgM BCR provides constitutive tonic signaling for B cell survival. Mediates pre-BCR signaling that regulates B cell selection and rearrangement of Ig genes via allelic exclusion. The protein is Immunoglobulin heavy constant mu of Homo sapiens (Human).